A 189-amino-acid chain; its full sequence is Potassium-transporting ATPase KdpC subunit (189 aa).

A helical membrane pass occupies residues 10–30 (LTLVFCVFFSVCYILVLWIFA).

The protein belongs to the KdpC family. In terms of assembly, the system is composed of three essential subunits: KdpA, KdpB and KdpC.

It is found in the cell inner membrane. Part of the high-affinity ATP-driven potassium transport (or Kdp) system, which catalyzes the hydrolysis of ATP coupled with the electrogenic transport of potassium into the cytoplasm. This subunit acts as a catalytic chaperone that increases the ATP-binding affinity of the ATP-hydrolyzing subunit KdpB by the formation of a transient KdpB/KdpC/ATP ternary complex. In Phocaeicola vulgatus (strain ATCC 8482 / DSM 1447 / JCM 5826 / CCUG 4940 / NBRC 14291 / NCTC 11154) (Bacteroides vulgatus), this protein is Potassium-transporting ATPase KdpC subunit.